The following is a 604-amino-acid chain: Terpenoid synthase 30 (604 aa).

Asn-356, Asp-360, Asn-500, Thr-504, and Glu-508 together coordinate Mg(2+). Positions Asn-356–Asp-360 match the DDXXD motif; degenerate motif.

It belongs to the terpene synthase family. Tpsa subfamily. Mg(2+) serves as cofactor. Requires Mn(2+) as cofactor.

Its subcellular location is the cytoplasm. It participates in secondary metabolite biosynthesis; terpenoid biosynthesis. Its function is as follows. Involved in terpene biosynthesis in roots. Possesses sesquiterpene (C15) synthase activity and diterpene (C20) synthase activity in vitro. This chain is Terpenoid synthase 30, found in Arabidopsis thaliana (Mouse-ear cress).